Here is a 627-residue protein sequence, read N- to C-terminus: Altered inheritance of mitochondria protein 9, mitochondrial (627 aa).

The transit peptide at 1–43 (MIRYTVAGHSRRCVVGASKRVGAIKCITVAATKRFISNKSNEV) directs the protein to the mitochondrion.

The protein belongs to the AIM9 family.

It is found in the mitochondrion. This Saccharomyces cerevisiae (strain JAY291) (Baker's yeast) protein is Altered inheritance of mitochondria protein 9, mitochondrial (AIM9).